A 96-amino-acid chain; its full sequence is MCHTSCSSGCQPACCAPSPCQASCYIPVGCQSSVCVPVSFKPAVCVPVRCQSSVCVPVSCRPVVYAAPSCQSSGCCQPSCTSVLCRPISCSTPSCC.

14 consecutive repeat copies span residues 10 to 14 (CQPAC), 15 to 19 (CAPSP), 24 to 28 (CYIPV), 30 to 34 (CQSSV), 35 to 39 (CVPVS), 45 to 49 (CVPVR), 50 to 54 (CQSSV), 55 to 59 (CVPVS), 60 to 64 (CRPVV), 70 to 74 (CQSSG), 75 to 79 (CCQPS), 80 to 84 (CTSVL), 85 to 89 (CRPIS), and 90 to 94 (CSTPS). The segment at 10 to 94 (CQPACCAPSP…CRPISCSTPS (85 aa)) is 14 X 5 AA approximate repeats.

This sequence belongs to the KRTAP type 12 family. As to quaternary structure, interacts with hair keratins. In terms of tissue distribution, restricted to a narrow region of the hair fiber cuticle, lying approximately 20 cell layers above the apex of the dermal papilla of the hair root; not detected in any other tissues.

Functionally, in the hair cortex, hair keratin intermediate filaments are embedded in an interfilamentous matrix, consisting of hair keratin-associated proteins (KRTAP), which are essential for the formation of a rigid and resistant hair shaft through their extensive disulfide bond cross-linking with abundant cysteine residues of hair keratins. The matrix proteins include the high-sulfur and high-glycine-tyrosine keratins. The sequence is that of Keratin-associated protein 12-1 (KRTAP12-1) from Homo sapiens (Human).